A 168-amino-acid polypeptide reads, in one-letter code: MSRSRINGNFIDKTFSIVANILLRIIPTTSGEKEAFAYYRDGMSAQSEGNYAEALQNYYEAMRLEIDPYDRSYILYNIGLIHTRNGEHTKALEYYFRALERNPFLPQAFNNMAVICHYRGEQAIRQGDSEIAEAWFDQAAEYWKQALALTPGNYIEAQNWLKITGRFE.

TPR repeat units lie at residues 35–68 (AFAYYRDGMSAQSEGNYAEALQNYYEAMRLEIDP), 72–105 (SYILYNIGLIHTRNGEHTKALEYYFRALERNPFL), and 120–153 (GEQAIRQGDSEIAEAWFDQAAEYWKQALALTPGN).

This sequence belongs to the Ycf3 family.

The protein resides in the plastid. The protein localises to the chloroplast thylakoid membrane. In terms of biological role, essential for the assembly of the photosystem I (PSI) complex. May act as a chaperone-like factor to guide the assembly of the PSI subunits. The chain is Photosystem I assembly protein Ycf3 from Morus indica (Mulberry).